Here is a 379-residue protein sequence, read N- to C-terminus: Cytochrome b (379 aa).

4 helical membrane-spanning segments follow: residues 34–54 (FGSL…LLAM), 78–99 (WLIR…YLHI), 114–134 (WNTG…GYVL), and 179–199 (FFAL…IHLT). Residues histidine 84 and histidine 98 each contribute to the heme b site. Residues histidine 183 and histidine 197 each coordinate heme b. Histidine 202 serves as a coordination point for a ubiquinone. Helical transmembrane passes span 227 to 247 (LKDI…AFFS), 289 to 309 (LGGV…PFLH), 321 to 341 (LSQV…WIGS), and 348 to 368 (FIII…ILFP).

The protein belongs to the cytochrome b family. As to quaternary structure, the cytochrome bc1 complex contains 11 subunits: 3 respiratory subunits (MT-CYB, CYC1 and UQCRFS1), 2 core proteins (UQCRC1 and UQCRC2) and 6 low-molecular weight proteins (UQCRH/QCR6, UQCRB/QCR7, UQCRQ/QCR8, UQCR10/QCR9, UQCR11/QCR10 and a cleavage product of UQCRFS1). This cytochrome bc1 complex then forms a dimer. Heme b serves as cofactor.

It is found in the mitochondrion inner membrane. Its function is as follows. Component of the ubiquinol-cytochrome c reductase complex (complex III or cytochrome b-c1 complex) that is part of the mitochondrial respiratory chain. The b-c1 complex mediates electron transfer from ubiquinol to cytochrome c. Contributes to the generation of a proton gradient across the mitochondrial membrane that is then used for ATP synthesis. In Casuarius bennetti (Dwarf cassowary), this protein is Cytochrome b (MT-CYB).